Consider the following 303-residue polypeptide: Caspase-7 (303 aa).

At M1 the chain carries N-acetylmethionine. A propeptide spanning residues 1–23 is cleaved from the precursor; it reads MTDDQDCAAELEKVDSSSEDGVD. The disordered stretch occupies residues 1 to 26; the sequence is MTDDQDCAAELEKVDSSSEDGVDAKP. Over residues 10-26 the composition is skewed to basic and acidic residues; that stretch reads ELEKVDSSSEDGVDAKP. S30 is modified (phosphoserine). The segment at 38-41 is exosite; that stretch reads KKKR. Residues 76–87 are loop L1; it reads KNFDKATGMDVR. The active site involves H144. T173 is subject to Phosphothreonine. Residue C186 is part of the active site. Residues 187-196 form a loop L2 region; it reads RGTELDDGIQ. Positions 199-206 are excised as a propeptide; the sequence is SGPINDID. A loop L3 region spans residues 226–238; it reads VPGYYSWRNPGKG. At S239 the chain carries Phosphoserine. Residues 274-288 are loop L4; sequence ESQSDDPRFNEKKQI.

This sequence belongs to the peptidase C14A family. In terms of assembly, heterotetramer that consists of two anti-parallel arranged heterodimers, each one formed by a 20 kDa (p20) and a 11 kDa (p11) subunit. Interacts with XIAP (via its second BIR domain); inhibiting CASP7 activity. Interacts with BIRC6/bruce. Interacts with ATXN3 (short isoform 1). Interacts with HSPA5. In terms of processing, cleavage by different proteases, such as granzyme B (GZMB), caspase-1 (CASP1), caspase-8 (CASP8) or caspase-9 (CASP9) generate the two active subunits. Its involvement in different programmed cell death processes is probably specified by the protease that activates CASP7. Cleaved and activated by initiator caspases (CASP8 and/or CASP9), leading to execution phase of apoptosis. Cleavage and maturation by GZMB regulates granzyme-mediated programmed cell death. Cleaved and activated by CASP1 in response to bacterial infection. Propeptide domains can also be cleaved efficiently by CASP3. Active heterodimers between the small subunit of caspase-7 and the large subunit of CASP3, and vice versa, also occur. Also cleaved at the N-terminus at alternative sites by CAPN1, leading to its activation. Phosphorylation at Ser-30 and Ser-239 by PAK2 inhibits its activity. Phosphorylation at Ser-30 prevents cleavage and activation by initiator caspase CASP9, while phosphorylation at Ser-239 prevents thiol protease activity by preventing substrate-binding. Post-translationally, ubiquitinated by BIRC6; this activity is inhibited by DIABLO/SMAC. As to expression, highly expressed in heart, lung, liver and kidney. Low levels in spleen, skeletal muscle and testis. No expression in the brain.

The protein localises to the cytoplasm. It localises to the cytosol. It is found in the nucleus. The protein resides in the secreted. Its subcellular location is the extracellular space. The catalysed reaction is Strict requirement for an Asp residue at position P1 and has a preferred cleavage sequence of Asp-Glu-Val-Asp-|-.. During activation, the N-terminal disordered prodomain is removed by cleavage. Concomitantly, double cleavage gives rise to a large Caspase-7 subunit p20 and a small Caspase-7 subunit p11. The two large and two small subunits then assemble to form the active CASP7 complex. Can be cleaved and activated by different caspases, depending on the context. Cleaved and activated by initiator caspases (CASP8 and/or CASP9), leading to execution phase of apoptosis. Cleavage and maturation by GZMB regulates granzyme-mediated programmed cell death. Cleavage and maturation by CASP1 regulates pyroptosis. Inhibited by XIAP, which directly binds to the active site pocket and obstructs substrate entry. Phosphorylation at Ser-30 and Ser-239 by PAK2 inhibits its activity. Inhibited by BIRC6; following inhibition of BIRC6-caspase binding by DIABLO/SMAC, BIRC6 is subjected to caspase cleavage, leading to an increase in active caspases. Its function is as follows. Thiol protease involved in different programmed cell death processes, such as apoptosis, pyroptosis or granzyme-mediated programmed cell death, by proteolytically cleaving target proteins. Has a marked preference for Asp-Glu-Val-Asp (DEVD) consensus sequences, with some plasticity for alternate non-canonical sequences. Its involvement in the different programmed cell death processes is probably determined by upstream proteases that activate CASP7. Acts as an effector caspase involved in the execution phase of apoptosis: following cleavage and activation by initiator caspases (CASP8 and/or CASP9), mediates execution of apoptosis by catalyzing cleavage of proteins, such as CLSPN, PARP1, PTGES3 and YY1. Compared to CASP3, acts as a minor executioner caspase and cleaves a limited set of target proteins. Acts as a key regulator of the inflammatory response in response to bacterial infection by catalyzing cleavage and activation of the sphingomyelin phosphodiesterase SMPD1 in the extracellular milieu, thereby promoting membrane repair. Regulates pyroptosis in intestinal epithelial cells: cleaved and activated by CASP1 in response to S.typhimurium infection, promoting its secretion to the extracellular milieu, where it catalyzes activation of SMPD1, generating ceramides that repair membranes and counteract the action of gasdermin-D (GSDMD) pores. Regulates granzyme-mediated programmed cell death in hepatocytes: cleaved and activated by granzyme B (GZMB) in response to bacterial infection, promoting its secretion to the extracellular milieu, where it catalyzes activation of SMPD1, generating ceramides that repair membranes and counteract the action of perforin (PRF1) pores. Following cleavage by CASP1 in response to inflammasome activation, catalyzes processing and inactivation of PARP1, alleviating the transcription repressor activity of PARP1. Acts as an inhibitor of type I interferon production during virus-induced apoptosis by mediating cleavage of antiviral proteins CGAS, IRF3 and MAVS, thereby preventing cytokine overproduction. Cleaves and activates sterol regulatory element binding proteins (SREBPs). Cleaves phospholipid scramblase proteins XKR4, XKR8 and XKR9. Cleaves BIRC6 following inhibition of BIRC6-caspase binding by DIABLO/SMAC. The sequence is that of Caspase-7 from Mus musculus (Mouse).